A 274-amino-acid polypeptide reads, in one-letter code: Diaminopimelate epimerase (274 aa).

Asn-11, Gln-44, and Asn-64 together coordinate substrate. Cys-73 acts as the Proton donor in catalysis. Residues Gly-74 to Asn-75, Asn-157, Asn-190, and Glu-208 to Arg-209 contribute to the substrate site. Cys-217 serves as the catalytic Proton acceptor. Gly-218–Ser-219 lines the substrate pocket.

This sequence belongs to the diaminopimelate epimerase family. As to quaternary structure, homodimer.

It localises to the cytoplasm. The enzyme catalyses (2S,6S)-2,6-diaminopimelate = meso-2,6-diaminopimelate. It functions in the pathway amino-acid biosynthesis; L-lysine biosynthesis via DAP pathway; DL-2,6-diaminopimelate from LL-2,6-diaminopimelate: step 1/1. Functionally, catalyzes the stereoinversion of LL-2,6-diaminopimelate (L,L-DAP) to meso-diaminopimelate (meso-DAP), a precursor of L-lysine and an essential component of the bacterial peptidoglycan. The polypeptide is Diaminopimelate epimerase (Shigella boydii serotype 18 (strain CDC 3083-94 / BS512)).